We begin with the raw amino-acid sequence, 490 residues long: GTPase Der (490 aa).

EngA-type G domains follow at residues 3-166 (PVVA…MEDL) and 203-376 (IKLA…DSST). GTP contacts are provided by residues 9 to 16 (GRPNVGKS), 56 to 60 (DTGGI), 118 to 121 (NKTD), 209 to 216 (GRPNVGKS), 256 to 260 (DTAGV), and 321 to 324 (NKWD). The region spanning 377 to 461 (RRVGTSMLTR…PIRIQFKEGE (85 aa)) is the KH-like domain.

The protein belongs to the TRAFAC class TrmE-Era-EngA-EngB-Septin-like GTPase superfamily. EngA (Der) GTPase family. As to quaternary structure, associates with the 50S ribosomal subunit.

GTPase that plays an essential role in the late steps of ribosome biogenesis. This chain is GTPase Der, found in Escherichia coli O17:K52:H18 (strain UMN026 / ExPEC).